We begin with the raw amino-acid sequence, 318 residues long: B3 domain-containing protein At1g05930 (318 aa).

The segment at residues 201–293 (FNRLISNDFL…VLCFAMRQWR (93 aa)) is a DNA-binding region (TF-B3).

The protein localises to the nucleus. The protein is B3 domain-containing protein At1g05930 of Arabidopsis thaliana (Mouse-ear cress).